The chain runs to 448 residues: Adenylosuccinate synthetase (448 aa).

Residues 36–42 (GDEGKGK) and 64–66 (GHT) each bind GTP. Aspartate 37 (proton acceptor) is an active-site residue. Positions 37 and 64 each coordinate Mg(2+). IMP-binding positions include 37–40 (DEGK), 62–65 (NAGH), threonine 154, arginine 168, asparagine 246, threonine 261, and arginine 325. Histidine 65 functions as the Proton donor in the catalytic mechanism. 321-327 (VTTKRKR) contributes to the substrate binding site. Residues arginine 327, 353-355 (KLD), and 436-438 (GVG) contribute to the GTP site.

Belongs to the adenylosuccinate synthetase family. In terms of assembly, homodimer. It depends on Mg(2+) as a cofactor.

The protein localises to the cytoplasm. It carries out the reaction IMP + L-aspartate + GTP = N(6)-(1,2-dicarboxyethyl)-AMP + GDP + phosphate + 2 H(+). It functions in the pathway purine metabolism; AMP biosynthesis via de novo pathway; AMP from IMP: step 1/2. In terms of biological role, plays an important role in the de novo pathway and in the salvage pathway of purine nucleotide biosynthesis. Catalyzes the first committed step in the biosynthesis of AMP from IMP. The sequence is that of Adenylosuccinate synthetase from Drosophila mojavensis (Fruit fly).